A 431-amino-acid polypeptide reads, in one-letter code: IMP-specific 5'-nucleotidase 1 (431 aa).

K117 is an ATP binding site. The active-site Nucleophile is D157. Residues D157, D159, D165, T193, D349, and K357 each coordinate IMP. Positions 157 and 159 each coordinate Mg(2+). The active-site Proton donor is D159. A Mg(2+)-binding site is contributed by D388.

Belongs to the ISN1 family. Homotetramer. It depends on Mg(2+) as a cofactor.

It carries out the reaction IMP + H2O = inosine + phosphate. With respect to regulation, allosterically activated by ATP. ATP binding is a prerequisite to magnesium and substrate binding. ATP binds to 2 of the subunits in the homotetramer inducing a closure of these 2 subunits and the release of the C-terminal loop, thereby activating the enzyme. Functionally, IMP-specific 5'-nucleotidase involved in IMP (inositol monophosphate) degradation. The protein is IMP-specific 5'-nucleotidase 1 (isn-1) of Neurospora crassa (strain ATCC 24698 / 74-OR23-1A / CBS 708.71 / DSM 1257 / FGSC 987).